The following is an 842-amino-acid chain: Glycogen phosphorylase, muscle form (842 aa).

The residue at position 2 (Ser2) is an N-acetylserine. At Ser15 the chain carries Phosphoserine; by PHK; in form phosphorylase A. Positions 43 and 76 each coordinate AMP. A phosphotyrosine mark is found at Tyr204 and Tyr227. 310–319 (RRFKSSKFGC) is a binding site for AMP. Ser430 bears the Phosphoserine mark. Residue Tyr473 is modified to Phosphotyrosine. The residue at position 681 (Lys681) is an N6-(pyridoxal phosphate)lysine. 2 positions are modified to phosphoserine: Ser747 and Ser748.

Belongs to the glycogen phosphorylase family. As to quaternary structure, homodimer. Homotetramer; to form the enzymatically active phosphorylase A. Requires pyridoxal 5'-phosphate as cofactor. In terms of processing, phosphorylation of Ser-15 converts phosphorylase B (unphosphorylated) to phosphorylase A.

The catalysed reaction is [(1-&gt;4)-alpha-D-glucosyl](n) + phosphate = [(1-&gt;4)-alpha-D-glucosyl](n-1) + alpha-D-glucose 1-phosphate. Its activity is regulated as follows. Allosterically regulated through the non-covalent binding of metabolites, being activated by AMP and inhibited by ATP, ADP, and glucose-6-phosphate. The activity is also controlled by post-translational modifications including phosphorylation. Its function is as follows. Allosteric enzyme that catalyzes the rate-limiting step in glycogen catabolism, the phosphorolytic cleavage of glycogen to produce glucose-1-phosphate, and plays a central role in maintaining cellular and organismal glucose homeostasis. This chain is Glycogen phosphorylase, muscle form, found in Ovis aries (Sheep).